We begin with the raw amino-acid sequence, 310 residues long: Cytosolic Fe-S cluster assembly factor NUBP1 homolog (310 aa).

Cysteine 12, cysteine 26, cysteine 29, and cysteine 35 together coordinate [4Fe-4S] cluster. 66–73 is an ATP binding site; it reads GKGGVGKS. Cysteine 240 and cysteine 243 together coordinate [4Fe-4S] cluster.

Belongs to the Mrp/NBP35 ATP-binding proteins family. NUBP1/NBP35 subfamily. As to quaternary structure, heterotetramer of 2 NUBP1 and 2 NUBP2 chains. [4Fe-4S] cluster is required as a cofactor.

The protein localises to the cytoplasm. Functionally, component of the cytosolic iron-sulfur (Fe/S) protein assembly (CIA) machinery. Required for maturation of extramitochondrial Fe-S proteins. The NUBP1-NUBP2 heterotetramer forms a Fe-S scaffold complex, mediating the de novo assembly of an Fe-S cluster and its transfer to target apoproteins. This Brugia malayi (Filarial nematode worm) protein is Cytosolic Fe-S cluster assembly factor NUBP1 homolog.